The primary structure comprises 438 residues: DNA primase DnaG (438 aa).

One can recognise a Toprim domain in the interval 169–243 (DSIIVVEGRA…DIDYVARAPY (75 aa)). Mg(2+) contacts are provided by glutamate 175, aspartate 217, and aspartate 219.

This sequence belongs to the archaeal DnaG primase family. In terms of assembly, forms a ternary complex with MCM helicase and DNA. Mg(2+) is required as a cofactor.

The enzyme catalyses ssDNA + n NTP = ssDNA/pppN(pN)n-1 hybrid + (n-1) diphosphate.. RNA polymerase that catalyzes the synthesis of short RNA molecules used as primers for DNA polymerase during DNA replication. The protein is DNA primase DnaG of Methanococcus maripaludis (strain C6 / ATCC BAA-1332).